A 1276-amino-acid chain; its full sequence is Probable outer membrane protein pmp6 (1276 aa).

The first 23 residues, 1-23, serve as a signal peptide directing secretion; sequence MKYSLPWLLTSSALVFSLHPLMA. One can recognise an Autotransporter domain in the interval 981–1276; that stretch reads DAPSHPGIWI…NANCGTRYSF (296 aa).

The protein belongs to the PMP outer membrane protein family.

It is found in the secreted. The protein localises to the cell wall. The protein resides in the cell outer membrane. The chain is Probable outer membrane protein pmp6 (pmp6) from Chlamydia pneumoniae (Chlamydophila pneumoniae).